A 432-amino-acid chain; its full sequence is RNA exonuclease 4 (432 aa).

Positions 42–54 (ARKKAKKKFRKSK) are enriched in basic residues. A disordered region spans residues 42–177 (ARKKAKKKFR…AKKRTYSDIS (136 aa)). Basic and acidic residues predominate over residues 121–137 (KASDKSKGDKQRTEKAK). S123 carries the phosphoserine modification. K127 is covalently cross-linked (Glycyl lysine isopeptide (Lys-Gly) (interchain with G-Cter in SUMO2)). The Exonuclease domain maps to 230–381 (KRLGQKKRTI…PSLKRLSEKI (152 aa)).

Belongs to the REXO4 family. In terms of assembly, can bind ESR1 and ESR2. This interaction is abrogated by estrogen and augmented by tamoxifen treatment.

The protein resides in the nucleus. The protein localises to the nucleolus. Functionally, may function as an exonuclease. This chain is RNA exonuclease 4 (Rexo4), found in Mus musculus (Mouse).